We begin with the raw amino-acid sequence, 173 residues long: Probable xanthine dehydrogenase subunit E (173 aa).

One can recognise a 2Fe-2S ferredoxin-type domain in the interval 14–90 (EQFRMTVNGQ…GHSITTIEGL (77 aa)). The [2Fe-2S] cluster site is built by Cys52, Cys57, Cys60, Cys72, Cys110, Cys113, Cys145, and Cys147.

Could be composed of four subunits: PucA, PucC, PucD and PucE. The cofactor is [2Fe-2S] cluster.

The catalysed reaction is xanthine + NAD(+) + H2O = urate + NADH + H(+). The enzyme catalyses hypoxanthine + NAD(+) + H2O = xanthine + NADH + H(+). Its pathway is purine metabolism; hypoxanthine degradation; urate from hypoxanthine: step 1/2. The protein operates within purine metabolism; hypoxanthine degradation; urate from hypoxanthine: step 2/2. In terms of biological role, oxidizes hypoxanthine and xanthine to uric acid. This is Probable xanthine dehydrogenase subunit E (pucE) from Bacillus subtilis (strain 168).